A 217-amino-acid polypeptide reads, in one-letter code: Cysteine-rich protein 3 (217 aa).

The 62-residue stretch at 3–64 (WTCPRCQQPV…KPCYGALFGP (62 aa)) folds into the LIM zinc-binding 1 domain. The disordered stretch occupies residues 84–112 (PGCTTPLSPSSFSPPRPRTGLPQGKKSPP). Residues 122–183 (SLCPGCGEPV…VPCYGYLFGP (62 aa)) enclose the LIM zinc-binding 2 domain.

In terms of tissue distribution, expressed in most tissues, but not in skeletal muscle.

Its subcellular location is the cytoplasm. The polypeptide is Cysteine-rich protein 3 (CRIP3) (Homo sapiens (Human)).